Reading from the N-terminus, the 729-residue chain is Neurochondrin (729 aa).

An N-acetylserine modification is found at Ser-2. Ser-2 carries the phosphoserine modification. Residues Cys-3 and Cys-4 are each lipidated (S-palmitoyl cysteine). At Arg-75 the chain carries Asymmetric dimethylarginine. Residue Ser-448 is modified to Phosphoserine.

It belongs to the neurochondrin family. Interacts with MCHR1. Interacts with SEMA4C. Interacts with DIAPH1 (via FH3 domain). Interacts with GRM5. Post-translationally, palmitoylated. Palmitoylation by ZDHHC1, ZDHHC3 and ZDHHC11 regulates the association of NCDN with endosome membranes. May also be palmitoylated by ZDHHC7. Expressed in the neuronal, chondral and bone tissues. Expressed in dendrites. Enriched in the brain in the surface layer I-IV. In brains, protein level increases in male but decreases in female with advancing age (at protein level). In adult brains, it is highly expressed in the forebrain and hindbrain. Highly expressed in the hippocampus, piriform cortex, septum, amygdaloid complex, medial geniculate nucleus, inferior colliculus, cerebellar nuclei and the nuclei of the Vth, VIIth, and XIIth cranial nerves. In bone tissues, it is expressed in osteoblasts and osteocytes.

It localises to the cytoplasm. It is found in the cytosol. The protein resides in the endosome membrane. Its subcellular location is the cell projection. The protein localises to the dendrite. It localises to the postsynapse. In terms of biological role, probably involved in signal transduction, in the nervous system, via increasing cell surface localization of GRM5 and positively regulating its signaling. Required for the spatial learning process. Acts as a negative regulator of Ca(2+)-calmodulin-dependent protein kinase 2 (CaMK2) phosphorylation. May play a role in modulating melanin-concentrating hormone-mediated functions via its interaction with MCHR1 that interferes with G protein-coupled signal transduction. May be involved in bone metabolism. May also be involved in neurite outgrowth. The sequence is that of Neurochondrin (Ncdn) from Mus musculus (Mouse).